We begin with the raw amino-acid sequence, 102 residues long: RNA-binding protein Hfq (102 aa).

The region spanning 9–68 is the Sm domain; sequence DPFLNALRRERVPVSIYLVNGIKLQGQIESFDQFVILLKNTVSQMVYKHAISTVVPSRPV. Residues 63–102 form a disordered region; that stretch reads VPSRPVSHHSNNASGGTSSNYHHGSSAQNTSAQQDSEETE. Over residues 70–96 the composition is skewed to polar residues; the sequence is HHSNNASGGTSSNYHHGSSAQNTSAQQ.

Belongs to the Hfq family. As to quaternary structure, homohexamer.

Its function is as follows. RNA chaperone that binds small regulatory RNA (sRNAs) and mRNAs to facilitate mRNA translational regulation in response to envelope stress, environmental stress and changes in metabolite concentrations. Also binds with high specificity to tRNAs. The chain is RNA-binding protein Hfq from Shigella boydii serotype 18 (strain CDC 3083-94 / BS512).